The primary structure comprises 61 residues: Large ribosomal subunit protein uL30 (61 aa).

This sequence belongs to the universal ribosomal protein uL30 family. Part of the 50S ribosomal subunit.

This is Large ribosomal subunit protein uL30 from Neisseria gonorrhoeae (strain ATCC 700825 / FA 1090).